A 239-amino-acid polypeptide reads, in one-letter code: RBPJ-interacting and tubulin-associated protein 1 (239 aa).

Residues 12–24 (LDLSITGHSTALP) carry the Nuclear export signal motif. Disordered stretches follow at residues 62–97 (APPSQTPLLWSPGEIKENKKTSSCRPKSTPAGTPRK) and 149–239 (LVQQ…PPWK). The short motif at 93–109 (GTPRKKIQYRVKSRTPS) is the Nuclear localization signal element. Residues 129-158 (WVKKEDTVKIRPLLWSPSPRLVQQSSMQNA) are interaction with RBPJ/RBPSUH. 2 stretches are compositionally biased toward polar residues: residues 149 to 159 (LVQQSSMQNAK) and 203 to 221 (RQRQSTPGRETVRSASCSG). Residues 158–239 (AKQGPLRAVH…VKMQERPPWK (82 aa)) form an interaction with tubulin region.

Belongs to the RITA family. As to quaternary structure, interacts with rbpj/rbpsuh.

It is found in the cytoplasm. The protein localises to the nucleus. Tubulin-binding protein that acts as a negative regulator of Notch signaling pathway. Shuttles between the cytoplasm and the nucleus and mediates the nuclear export of rbpj/rbpsuh, thereby preventing the interaction between rbpj/rbpsuh and NICD product of Notch proteins (Notch intracellular domain), leading to down-regulate Notch-mediated transcription. May play a role in neurogenesis. The polypeptide is RBPJ-interacting and tubulin-associated protein 1 (rita1) (Xenopus laevis (African clawed frog)).